A 356-amino-acid chain; its full sequence is Protein MGF 360-19R (356 aa).

An ANK repeat occupies 61–93; it reads LLNTALMKAVQENNYELIMLFTEWGANINYGLL.

This sequence belongs to the asfivirus MGF 360 family.

Plays a role in virus cell tropism, and may be required for efficient virus replication in macrophages. This is Protein MGF 360-19R from African swine fever virus (isolate Pig/Kenya/KEN-50/1950) (ASFV).